Reading from the N-terminus, the 359-residue chain is 5-formaminoimidazole-4-carboxamide-1-(beta)-D-ribofuranosyl 5'-monophosphate synthetase (359 aa).

The 5-amino-1-(5-phospho-beta-D-ribosyl)imidazole-4-carboxamide site is built by histidine 28 and serine 95. An ATP-grasp domain is found at 115-346; sequence ELMIWETDRD…MGRRIAREIK (232 aa). ATP is bound by residues 144 to 206 and glutamate 228; that span reads PEEI…ANIY. Asparagine 256 provides a ligand contact to 5-amino-1-(5-phospho-beta-D-ribosyl)imidazole-4-carboxamide. Glutamate 295 and glutamate 308 together coordinate Mg(2+).

The protein belongs to the phosphohexose mutase family. Requires Mg(2+) as cofactor. The cofactor is Mn(2+).

It catalyses the reaction 5-amino-1-(5-phospho-beta-D-ribosyl)imidazole-4-carboxamide + formate + ATP = 5-formamido-1-(5-phospho-D-ribosyl)imidazole-4-carboxamide + ADP + phosphate. Its pathway is purine metabolism; IMP biosynthesis via de novo pathway; 5-formamido-1-(5-phospho-D-ribosyl)imidazole-4-carboxamide from 5-amino-1-(5-phospho-D-ribosyl)imidazole-4-carboxamide (formate route): step 1/1. Its function is as follows. Catalyzes the ATP- and formate-dependent formylation of 5-aminoimidazole-4-carboxamide-1-beta-d-ribofuranosyl 5'-monophosphate (AICAR) to 5-formaminoimidazole-4-carboxamide-1-beta-d-ribofuranosyl 5'-monophosphate (FAICAR) in the absence of folates. The chain is 5-formaminoimidazole-4-carboxamide-1-(beta)-D-ribofuranosyl 5'-monophosphate synthetase from Archaeoglobus fulgidus (strain ATCC 49558 / DSM 4304 / JCM 9628 / NBRC 100126 / VC-16).